We begin with the raw amino-acid sequence, 267 residues long: Pro-opiomelanocortin (267 aa).

Positions 1–26 (MPRSCCSRSGALLLALLLQASMEVRG) are cleaved as a signal peptide. An intrachain disulfide couples Cys-28 to Cys-50. Thr-71 is a glycosylation site (O-linked (HexNAc...) threonine). Phe-87 is modified (phenylalanine amide). Disordered stretches follow at residues 88–175 (GRRN…FPLE), 181–200 (TGQR…DGAG), and 222–241 (RMEH…GGFM). N-linked (GlcNAc...) asparagine glycosylation occurs at Asn-91. Over residues 121–145 (PEPRSDGAKPGPREGKRSYSMEHFR) the composition is skewed to basic and acidic residues. Glu-134 carries the glutamic acid 1-amide modification. N-acetylserine; in Corticotropin is present on Ser-138. Val-150 bears the Valine amide mark. Ser-168 carries the post-translational modification Phosphoserine. A compositionally biased stretch (basic and acidic residues) spans 222–237 (RMEHFRWGSPPKDKRY).

It belongs to the POMC family. Post-translationally, specific enzymatic cleavages at paired basic residues yield the different active peptides. In terms of processing, O-glycosylated; reducing sugar is probably N-acetylgalactosamine. In terms of tissue distribution, ACTH and MSH are produced by the pituitary gland.

The protein localises to the secreted. In terms of biological role, stimulates the adrenal glands to release cortisol. Anorexigenic peptide. Increases the pigmentation of skin by increasing melanin production in melanocytes. Its function is as follows. Increases the pigmentation of skin by increasing melanin production in melanocytes. Functionally, endogenous orexigenic opiate. In terms of biological role, endogenous opiate. This is Pro-opiomelanocortin (POMC) from Homo sapiens (Human).